We begin with the raw amino-acid sequence, 500 residues long: Protein C13 (500 aa).

The 63-residue stretch at 27–89 (EEIVFIMTVG…IETGIVTIDL (63 aa)) folds into the BTB domain. Kelch repeat units lie at residues 301–348 (ILYL…IFKN), 349–395 (RIYV…GTDN), 397–440 (LYVV…YHHG), and 441–490 (YIYM…IIED).

This sequence belongs to the poxviruses Kelch family.

This is Protein C13 from Swinepox virus (strain Kasza) (SWPV).